The following is a 338-amino-acid chain: Ketol-acid reductoisomerase (NADP(+)) (338 aa).

Residues 1-181 (MQIFYDKDCD…GGGRTGIIET (181 aa)) form the KARI N-terminal Rossmann domain. NADP(+) contacts are provided by residues 24 to 27 (YGSQ), R47, S50, S52, and 82 to 85 (DEFQ). Residue H107 is part of the active site. Residue G133 coordinates NADP(+). The 146-residue stretch at 182-327 (SFREETETDL…SKLRAMMPWI (146 aa)) folds into the KARI C-terminal knotted domain. Residues D190, E194, E226, and E230 each coordinate Mg(2+). S251 contacts substrate.

Belongs to the ketol-acid reductoisomerase family. The cofactor is Mg(2+).

The catalysed reaction is (2R)-2,3-dihydroxy-3-methylbutanoate + NADP(+) = (2S)-2-acetolactate + NADPH + H(+). It catalyses the reaction (2R,3R)-2,3-dihydroxy-3-methylpentanoate + NADP(+) = (S)-2-ethyl-2-hydroxy-3-oxobutanoate + NADPH + H(+). It functions in the pathway amino-acid biosynthesis; L-isoleucine biosynthesis; L-isoleucine from 2-oxobutanoate: step 2/4. It participates in amino-acid biosynthesis; L-valine biosynthesis; L-valine from pyruvate: step 2/4. Involved in the biosynthesis of branched-chain amino acids (BCAA). Catalyzes an alkyl-migration followed by a ketol-acid reduction of (S)-2-acetolactate (S2AL) to yield (R)-2,3-dihydroxy-isovalerate. In the isomerase reaction, S2AL is rearranged via a Mg-dependent methyl migration to produce 3-hydroxy-3-methyl-2-ketobutyrate (HMKB). In the reductase reaction, this 2-ketoacid undergoes a metal-dependent reduction by NADPH to yield (R)-2,3-dihydroxy-isovalerate. This is Ketol-acid reductoisomerase (NADP(+)) from Acinetobacter baylyi (strain ATCC 33305 / BD413 / ADP1).